A 143-amino-acid polypeptide reads, in one-letter code: Large ribosomal subunit protein bL28c (143 aa).

The transit peptide at 1 to 66 directs the protein to the chloroplast; it reads MTTMATQGAW…SFPGIQPIVA (66 aa).

The protein belongs to the bacterial ribosomal protein bL28 family. As to quaternary structure, part of the 50S ribosomal subunit.

Its subcellular location is the plastid. The protein localises to the chloroplast. The sequence is that of Large ribosomal subunit protein bL28c (RPL28) from Arabidopsis thaliana (Mouse-ear cress).